A 329-amino-acid polypeptide reads, in one-letter code: Putative methylthioribose-1-phosphate isomerase (329 aa).

Residues 50 to 52 (RGA), R84, and Q182 each bind substrate. The active-site Proton donor is D223. Residue 233–234 (NK) coordinates substrate.

This sequence belongs to the eIF-2B alpha/beta/delta subunits family. MtnA subfamily.

The enzyme catalyses 5-(methylsulfanyl)-alpha-D-ribose 1-phosphate = 5-(methylsulfanyl)-D-ribulose 1-phosphate. Catalyzes the interconversion of methylthioribose-1-phosphate (MTR-1-P) into methylthioribulose-1-phosphate (MTRu-1-P). The protein is Putative methylthioribose-1-phosphate isomerase of Methanocaldococcus jannaschii (strain ATCC 43067 / DSM 2661 / JAL-1 / JCM 10045 / NBRC 100440) (Methanococcus jannaschii).